Reading from the N-terminus, the 534-residue chain is Probable protein kinase UbiB (534 aa).

The chain crosses the membrane as a helical span at residues aspartate 23–tryptophan 43. Positions arginine 125–leucine 492 constitute a Protein kinase domain. ATP-binding positions include leucine 131–valine 139 and lysine 153. The active-site Proton acceptor is aspartate 288. 2 consecutive transmembrane segments (helical) span residues tryptophan 490 to glycine 510 and leucine 512 to valine 532.

It belongs to the ABC1 family. UbiB subfamily.

The protein resides in the cell inner membrane. It participates in cofactor biosynthesis; ubiquinone biosynthesis [regulation]. In terms of biological role, is probably a protein kinase regulator of UbiI activity which is involved in aerobic coenzyme Q (ubiquinone) biosynthesis. In Pseudomonas fluorescens (strain SBW25), this protein is Probable protein kinase UbiB.